Consider the following 227-residue polypeptide: Cytochrome c oxidase subunit 2 (227 aa).

Over 1-14 (MAHPVQLSLQDATS) the chain is Mitochondrial intermembrane. The helical transmembrane segment at 15–45 (PVMEELITFHDHAFMAMSLISFLVLYALLST) threads the bilayer. Residues 46–59 (LTTKLTNTSITDAQ) are Mitochondrial matrix-facing. Residues 60–87 (EMETIWTILPAIILILIALPSLRILYLT) traverse the membrane as a helical segment. The Mitochondrial intermembrane segment spans residues 88–227 (DEVNDPSFTI…IFEMGPVLTL (140 aa)). 6 residues coordinate Cu cation: H161, C196, E198, C200, H204, and M207. E198 serves as a coordination point for Mg(2+).

This sequence belongs to the cytochrome c oxidase subunit 2 family. Component of the cytochrome c oxidase (complex IV, CIV), a multisubunit enzyme composed of 14 subunits. The complex is composed of a catalytic core of 3 subunits MT-CO1, MT-CO2 and MT-CO3, encoded in the mitochondrial DNA, and 11 supernumerary subunits COX4I, COX5A, COX5B, COX6A, COX6B, COX6C, COX7A, COX7B, COX7C, COX8 and NDUFA4, which are encoded in the nuclear genome. The complex exists as a monomer or a dimer and forms supercomplexes (SCs) in the inner mitochondrial membrane with NADH-ubiquinone oxidoreductase (complex I, CI) and ubiquinol-cytochrome c oxidoreductase (cytochrome b-c1 complex, complex III, CIII), resulting in different assemblies (supercomplex SCI(1)III(2)IV(1) and megacomplex MCI(2)III(2)IV(2)). Found in a complex with TMEM177, COA6, COX18, COX20, SCO1 and SCO2. Interacts with TMEM177 in a COX20-dependent manner. Interacts with COX20. Interacts with COX16. Cu cation is required as a cofactor.

The protein resides in the mitochondrion inner membrane. It catalyses the reaction 4 Fe(II)-[cytochrome c] + O2 + 8 H(+)(in) = 4 Fe(III)-[cytochrome c] + 2 H2O + 4 H(+)(out). Functionally, component of the cytochrome c oxidase, the last enzyme in the mitochondrial electron transport chain which drives oxidative phosphorylation. The respiratory chain contains 3 multisubunit complexes succinate dehydrogenase (complex II, CII), ubiquinol-cytochrome c oxidoreductase (cytochrome b-c1 complex, complex III, CIII) and cytochrome c oxidase (complex IV, CIV), that cooperate to transfer electrons derived from NADH and succinate to molecular oxygen, creating an electrochemical gradient over the inner membrane that drives transmembrane transport and the ATP synthase. Cytochrome c oxidase is the component of the respiratory chain that catalyzes the reduction of oxygen to water. Electrons originating from reduced cytochrome c in the intermembrane space (IMS) are transferred via the dinuclear copper A center (CU(A)) of subunit 2 and heme A of subunit 1 to the active site in subunit 1, a binuclear center (BNC) formed by heme A3 and copper B (CU(B)). The BNC reduces molecular oxygen to 2 water molecules using 4 electrons from cytochrome c in the IMS and 4 protons from the mitochondrial matrix. In Macaca mulatta (Rhesus macaque), this protein is Cytochrome c oxidase subunit 2 (MT-CO2).